The sequence spans 229 residues: Large ribosomal subunit protein uL1 (229 aa).

Belongs to the universal ribosomal protein uL1 family. In terms of assembly, part of the 50S ribosomal subunit.

Its function is as follows. Binds directly to 23S rRNA. The L1 stalk is quite mobile in the ribosome, and is involved in E site tRNA release. In terms of biological role, protein L1 is also a translational repressor protein, it controls the translation of the L11 operon by binding to its mRNA. The protein is Large ribosomal subunit protein uL1 of Streptococcus pyogenes serotype M3 (strain SSI-1).